The following is a 173-amino-acid chain: Crossover junction endodeoxyribonuclease RuvC (173 aa).

Active-site residues include Asp8, Glu67, and Asp139. Mg(2+) is bound by residues Asp8, Glu67, and Asp139.

It belongs to the RuvC family. As to quaternary structure, homodimer which binds Holliday junction (HJ) DNA. The HJ becomes 2-fold symmetrical on binding to RuvC with unstacked arms; it has a different conformation from HJ DNA in complex with RuvA. In the full resolvosome a probable DNA-RuvA(4)-RuvB(12)-RuvC(2) complex forms which resolves the HJ. Mg(2+) serves as cofactor.

It localises to the cytoplasm. The enzyme catalyses Endonucleolytic cleavage at a junction such as a reciprocal single-stranded crossover between two homologous DNA duplexes (Holliday junction).. Functionally, the RuvA-RuvB-RuvC complex processes Holliday junction (HJ) DNA during genetic recombination and DNA repair. Endonuclease that resolves HJ intermediates. Cleaves cruciform DNA by making single-stranded nicks across the HJ at symmetrical positions within the homologous arms, yielding a 5'-phosphate and a 3'-hydroxyl group; requires a central core of homology in the junction. The consensus cleavage sequence is 5'-(A/T)TT(C/G)-3'. Cleavage occurs on the 3'-side of the TT dinucleotide at the point of strand exchange. HJ branch migration catalyzed by RuvA-RuvB allows RuvC to scan DNA until it finds its consensus sequence, where it cleaves and resolves the cruciform DNA. The chain is Crossover junction endodeoxyribonuclease RuvC from Salmonella agona (strain SL483).